An 88-amino-acid chain; its full sequence is Large ribosomal subunit protein bL27 (88 aa).

The interval 1–24 is disordered; it reads MAHKKAGGSSRNGRDSEGRRLGVK.

The protein belongs to the bacterial ribosomal protein bL27 family.

This Methylobacterium radiotolerans (strain ATCC 27329 / DSM 1819 / JCM 2831 / NBRC 15690 / NCIMB 10815 / 0-1) protein is Large ribosomal subunit protein bL27.